The chain runs to 156 residues: Small ribosomal subunit protein uS7 (156 aa).

Belongs to the universal ribosomal protein uS7 family. In terms of assembly, part of the 30S ribosomal subunit. Contacts proteins S9 and S11.

Its function is as follows. One of the primary rRNA binding proteins, it binds directly to 16S rRNA where it nucleates assembly of the head domain of the 30S subunit. Is located at the subunit interface close to the decoding center, probably blocks exit of the E-site tRNA. In Streptomyces coelicolor (strain ATCC BAA-471 / A3(2) / M145), this protein is Small ribosomal subunit protein uS7 (rspG).